The following is a 142-amino-acid chain: Ribosome-binding factor A (142 aa).

The tract at residues 119–142 (EAKQKQHGVETDAEQGDTKEEGDK) is disordered.

This sequence belongs to the RbfA family. In terms of assembly, monomer. Binds 30S ribosomal subunits, but not 50S ribosomal subunits or 70S ribosomes.

It is found in the cytoplasm. In terms of biological role, one of several proteins that assist in the late maturation steps of the functional core of the 30S ribosomal subunit. Associates with free 30S ribosomal subunits (but not with 30S subunits that are part of 70S ribosomes or polysomes). Required for efficient processing of 16S rRNA. May interact with the 5'-terminal helix region of 16S rRNA. The polypeptide is Ribosome-binding factor A (Shewanella pealeana (strain ATCC 700345 / ANG-SQ1)).